Reading from the N-terminus, the 173-residue chain is Phosphopantetheine adenylyltransferase (173 aa).

A substrate-binding site is contributed by S9. Residues 9–10 and H17 each bind ATP; that span reads SF. K41, T73, and R87 together coordinate substrate. ATP is bound by residues 88–90, E98, and 123–129; these read GLR and YQHLSSS.

This sequence belongs to the bacterial CoaD family. In terms of assembly, homohexamer. Requires Mg(2+) as cofactor.

The protein localises to the cytoplasm. It catalyses the reaction (R)-4'-phosphopantetheine + ATP + H(+) = 3'-dephospho-CoA + diphosphate. Its pathway is cofactor biosynthesis; coenzyme A biosynthesis; CoA from (R)-pantothenate: step 4/5. Functionally, reversibly transfers an adenylyl group from ATP to 4'-phosphopantetheine, yielding dephospho-CoA (dPCoA) and pyrophosphate. This is Phosphopantetheine adenylyltransferase from Limosilactobacillus reuteri (strain DSM 20016) (Lactobacillus reuteri).